The primary structure comprises 129 residues: Glycine cleavage system H protein (129 aa).

A Lipoyl-binding domain is found at 24-106 (TYTVGITEHA…YAGGWIFKIK (83 aa)). Position 65 is an N6-lipoyllysine (Lys65).

Belongs to the GcvH family. The glycine cleavage system is composed of four proteins: P, T, L and H. The cofactor is (R)-lipoate.

The glycine cleavage system catalyzes the degradation of glycine. The H protein shuttles the methylamine group of glycine from the P protein to the T protein. This is Glycine cleavage system H protein from Escherichia coli O127:H6 (strain E2348/69 / EPEC).